A 383-amino-acid chain; its full sequence is ATP phosphoribosyltransferase regulatory subunit (383 aa).

This sequence belongs to the class-II aminoacyl-tRNA synthetase family. HisZ subfamily. As to quaternary structure, heteromultimer composed of HisG and HisZ subunits.

The protein localises to the cytoplasm. Its pathway is amino-acid biosynthesis; L-histidine biosynthesis; L-histidine from 5-phospho-alpha-D-ribose 1-diphosphate: step 1/9. In terms of biological role, required for the first step of histidine biosynthesis. May allow the feedback regulation of ATP phosphoribosyltransferase activity by histidine. This chain is ATP phosphoribosyltransferase regulatory subunit, found in Paraburkholderia phymatum (strain DSM 17167 / CIP 108236 / LMG 21445 / STM815) (Burkholderia phymatum).